The sequence spans 218 residues: Phosphatidylserine decarboxylase proenzyme (218 aa).

Ser-187 acts as the Schiff-base intermediate with substrate; via pyruvic acid in catalysis. Ser-187 carries the pyruvic acid (Ser); by autocatalysis modification.

The protein belongs to the phosphatidylserine decarboxylase family. PSD-A subfamily. As to quaternary structure, heterodimer of a large membrane-associated beta subunit and a small pyruvoyl-containing alpha subunit. The cofactor is pyruvate. Is synthesized initially as an inactive proenzyme. Formation of the active enzyme involves a self-maturation process in which the active site pyruvoyl group is generated from an internal serine residue via an autocatalytic post-translational modification. Two non-identical subunits are generated from the proenzyme in this reaction, and the pyruvate is formed at the N-terminus of the alpha chain, which is derived from the carboxyl end of the proenzyme. The post-translation cleavage follows an unusual pathway, termed non-hydrolytic serinolysis, in which the side chain hydroxyl group of the serine supplies its oxygen atom to form the C-terminus of the beta chain, while the remainder of the serine residue undergoes an oxidative deamination to produce ammonia and the pyruvoyl prosthetic group on the alpha chain.

It is found in the cell membrane. The enzyme catalyses a 1,2-diacyl-sn-glycero-3-phospho-L-serine + H(+) = a 1,2-diacyl-sn-glycero-3-phosphoethanolamine + CO2. The protein operates within phospholipid metabolism; phosphatidylethanolamine biosynthesis; phosphatidylethanolamine from CDP-diacylglycerol: step 2/2. Its function is as follows. Catalyzes the formation of phosphatidylethanolamine (PtdEtn) from phosphatidylserine (PtdSer). In Geobacter metallireducens (strain ATCC 53774 / DSM 7210 / GS-15), this protein is Phosphatidylserine decarboxylase proenzyme.